Here is a 285-residue protein sequence, read N- to C-terminus: Probable enoyl-CoA hydratase echA12 (285 aa).

Belongs to the enoyl-CoA hydratase/isomerase family.

The enzyme catalyses a (3S)-3-hydroxyacyl-CoA = a (2E)-enoyl-CoA + H2O. It catalyses the reaction a 4-saturated-(3S)-3-hydroxyacyl-CoA = a (3E)-enoyl-CoA + H2O. In terms of biological role, could possibly oxidize fatty acids using specific components. The sequence is that of Probable enoyl-CoA hydratase echA12 (echA12) from Mycobacterium bovis (strain ATCC BAA-935 / AF2122/97).